A 670-amino-acid chain; its full sequence is MTNIQTQLDNLRKTLRQYEYEYHVLDNPSVPDSEYDRLFHQLKALELEHPEFLTSDSPTQRVGAKPLSGFSQIRHEIPMLSLDNAFSDAEFNAFVKRIEDRLILLPKQLTFCCEPKLDGLAVSILYVNGVLTQAATRGDGTIGEDITANIRTIRNVPLQLLTDNPPARLEVRGEVFMPHAGFERLNKYALEHNEKTFANPRNAAAGSLRQLDPNITSKRPLVLNAYGIGIAEGVDLPTTHYARLQWLKSIGIPVNPEIRLCNGADEVLGFYQDIQNKRSSLGYDIDGTVLKINDIALQNELGFISKAPRWATAYKFPAQEELTLLNDVEFQVGRTGAITPVAKLEPVFVAGVTVSNATLHNGDEIERLNIAIGDTVVIRRAGDVIPQIIGVLHERRPDNAKPIIFPTNCPVCDSQIIRIEGEAVARCTGGLFCAAQRKEALKHFVSRKAMDIDGVGGKLIEQLVDRELIHTPADLFKLDLTTLTRLERMGTKSAENALNSLENAKSTTLARFIFALGIREVGEATALNLANHFKTLDALKDANLEELQQVPDVGEVVANRIFIFWREAHNVAVVEDLIAQGVHWETVEVKEASENLFKDKTVVLTGTLTQMGRNEAKALLQQLGAKVSGSVSSKTDFVIAGDAAGSKLAKAQELNITVLTEEEFLAQITR.

NAD(+) is bound by residues 32–36 (DSEYD), 81–82 (SL), and glutamate 114. Lysine 116 (N6-AMP-lysine intermediate) is an active-site residue. Positions 137, 174, 291, and 315 each coordinate NAD(+). Zn(2+) contacts are provided by cysteine 409, cysteine 412, cysteine 427, and cysteine 433. A BRCT domain is found at 592-670 (ASENLFKDKT…EEEFLAQITR (79 aa)).

Belongs to the NAD-dependent DNA ligase family. LigA subfamily. Mg(2+) serves as cofactor. The cofactor is Mn(2+).

The catalysed reaction is NAD(+) + (deoxyribonucleotide)n-3'-hydroxyl + 5'-phospho-(deoxyribonucleotide)m = (deoxyribonucleotide)n+m + AMP + beta-nicotinamide D-nucleotide.. In terms of biological role, DNA ligase that catalyzes the formation of phosphodiester linkages between 5'-phosphoryl and 3'-hydroxyl groups in double-stranded DNA using NAD as a coenzyme and as the energy source for the reaction. It is essential for DNA replication and repair of damaged DNA. In Haemophilus influenzae (strain PittEE), this protein is DNA ligase.